A 378-amino-acid chain; its full sequence is Homeobox protein Meis3 (378 aa).

Residues Phe24 to Lys57 are disordered. Over residues Pro32–Pro43 the composition is skewed to pro residues. In terms of domain architecture, MEIS N-terminal spans Gly99–Asp182. Residues Asn203–Arg265 form a disordered region. The segment covering Ser230–Asp244 has biased composition (low complexity). Residues Arg265–Met327 constitute a DNA-binding region (homeobox; TALE-type).

The protein belongs to the TALE/MEIS homeobox family. In terms of tissue distribution, expressed at high levels in the brain. Significant expression also observed in the heart, spleen and lung. Expressed in pancreatic islets (beta-cells and non-beta-cells).

The protein localises to the nucleus. Its function is as follows. Transcriptional regulator which directly modulates PDPK1 expression, thus promoting survival of pancreatic beta-cells. Also regulates expression of NDFIP1, BNIP3, and CCNG1. The polypeptide is Homeobox protein Meis3 (Meis3) (Mus musculus (Mouse)).